We begin with the raw amino-acid sequence, 327 residues long: Zinc transport protein ZntB (327 aa).

Over 1-271 the chain is Cytoplasmic; it reads MESFAGKELQ…AMNRRTYTMS (271 aa). The chain crosses the membrane as a helical span at residues 272–292; sequence LLAMVFLPTTFLTGLFGVNLG. Over 293–300 the chain is Periplasmic; that stretch reads GIPGGDAP. The chain crosses the membrane as a helical span at residues 301 to 321; it reads FGFFTFCLMLVILVGGVAWWL. The Cytoplasmic segment spans residues 322 to 327; it reads KRSKWL.

Belongs to the CorA metal ion transporter (MIT) (TC 1.A.35) family.

It is found in the cell inner membrane. It carries out the reaction Zn(2+)(out) + H(+)(out) = Zn(2+)(in) + H(+)(in). Functionally, zinc transporter. Acts as a Zn(2+):proton symporter, which likely mediates zinc ion uptake. The protein is Zinc transport protein ZntB of Pectobacterium carotovorum subsp. carotovorum (strain PC1).